Here is a 278-residue protein sequence, read N- to C-terminus: Sulfur carrier protein FdhD (278 aa).

The active-site Cysteine persulfide intermediate is Cys113. A Mo-bis(molybdopterin guanine dinucleotide)-binding site is contributed by 251 to 256; sequence FCRNGR.

Belongs to the FdhD family.

The protein resides in the cytoplasm. Required for formate dehydrogenase (FDH) activity. Acts as a sulfur carrier protein that transfers sulfur from IscS to the molybdenum cofactor prior to its insertion into FDH. The protein is Sulfur carrier protein FdhD of Shewanella oneidensis (strain ATCC 700550 / JCM 31522 / CIP 106686 / LMG 19005 / NCIMB 14063 / MR-1).